The sequence spans 208 residues: Outer-membrane lipoprotein LolB (208 aa).

A signal peptide spans 1 to 23 (MKPIQKLSLFRLLPLSCVLLLTA). The N-palmitoyl cysteine moiety is linked to residue C24. C24 is lipidated: S-diacylglycerol cysteine.

It belongs to the LolB family. In terms of assembly, monomer.

It is found in the cell outer membrane. In terms of biological role, plays a critical role in the incorporation of lipoproteins in the outer membrane after they are released by the LolA protein. The polypeptide is Outer-membrane lipoprotein LolB (Photorhabdus laumondii subsp. laumondii (strain DSM 15139 / CIP 105565 / TT01) (Photorhabdus luminescens subsp. laumondii)).